A 272-amino-acid polypeptide reads, in one-letter code: ATP synthase subunit delta (272 aa).

Belongs to the ATPase delta chain family. In terms of assembly, F-type ATPases have 2 components, F(1) - the catalytic core - and F(0) - the membrane proton channel. F(1) has five subunits: alpha(3), beta(3), gamma(1), delta(1), epsilon(1). F(0) has three main subunits: a(1), b(2) and c(10-14). The alpha and beta chains form an alternating ring which encloses part of the gamma chain. F(1) is attached to F(0) by a central stalk formed by the gamma and epsilon chains, while a peripheral stalk is formed by the delta and b chains.

The protein resides in the cell membrane. Functionally, f(1)F(0) ATP synthase produces ATP from ADP in the presence of a proton or sodium gradient. F-type ATPases consist of two structural domains, F(1) containing the extramembraneous catalytic core and F(0) containing the membrane proton channel, linked together by a central stalk and a peripheral stalk. During catalysis, ATP synthesis in the catalytic domain of F(1) is coupled via a rotary mechanism of the central stalk subunits to proton translocation. This protein is part of the stalk that links CF(0) to CF(1). It either transmits conformational changes from CF(0) to CF(1) or is implicated in proton conduction. This chain is ATP synthase subunit delta, found in Corynebacterium urealyticum (strain ATCC 43042 / DSM 7109).